We begin with the raw amino-acid sequence, 354 residues long: Lysophosphatidic acid receptor 3 (354 aa).

Topologically, residues 1–31 (MNECHYDKRMDFFYNRSNTDTADEWTGTKLV) are extracellular. The N-linked (GlcNAc...) asparagine glycan is linked to Asn-15. A helical membrane pass occupies residues 32 to 52 (IVLCVGTFFCLFIFFSNSLVI). The Cytoplasmic portion of the chain corresponds to 53–67 (AAVITNRKFHFPFYY). A helical transmembrane segment spans residues 68 to 88 (LLANLAAADFFAGIAYVFLMF). Topologically, residues 89-101 (NTGPVSKTLTVNR) are extracellular. The helical transmembrane segment at 102 to 124 (WLLRQGLLDTSLTASLANLLVIA) threads the bilayer. Over 125–146 (VERHMSIMRMRIHSNLTKKRVT) the chain is Cytoplasmic. Residues 147 to 167 (LLILLVWAIAIFMGAVPTLGW) form a helical membrane-spanning segment. Over 168-186 (NCLCNISACSSLAPIYSRS) the chain is Extracellular. Asn-172 is a glycosylation site (N-linked (GlcNAc...) asparagine). The chain crosses the membrane as a helical span at residues 187-207 (YLIFWTVSNLLAFFIMVVVYV). Residues 208-240 (RIYMYVKRKTNVLSPHTSGSISRRRAPMKLMKT) are Cytoplasmic-facing. Residues 241-261 (VMTVLGAFVVCWTPGLVVLLL) form a helical membrane-spanning segment. Topologically, residues 262 to 276 (DGLNCKQCNVQHVKR) are extracellular. The helical transmembrane segment at 277-295 (WFLLLALLNSVMNPIIYSY) threads the bilayer. At 296-354 (KDEDMYNTMRKMICCAPHDSNAERHPSRIPSTIHSRSDTGSQYLEDSISQGQVCNKSSS) the chain is on the cytoplasmic side. The S-palmitoyl cysteine moiety is linked to residue Cys-309.

Belongs to the G-protein coupled receptor 1 family.

Its subcellular location is the cell membrane. Functionally, receptor for lysophosphatidic acid (LPA), a mediator of diverse cellular activities. Seems to be coupled to the G(i)/G(o) and G(q) families of heteromeric G proteins. The protein is Lysophosphatidic acid receptor 3 (Lpar3) of Rattus norvegicus (Rat).